The primary structure comprises 532 residues: Vesicular acetylcholine transporter unc-17 (532 aa).

Topologically, residues M1–K31 are cytoplasmic. The chain crosses the membrane as a helical span at residues C32 to V52. The Lumenal, vesicle segment spans residues P53–E101. N-linked (GlcNAc...) asparagine glycans are attached at residues N74 and N81. A helical transmembrane segment spans residues L102–G121. At Y122–E130 the chain is on the cytoplasmic side. The chain crosses the membrane as a helical span at residues I131 to K151. The Lumenal, vesicle segment spans residues S152–R160. A helical membrane pass occupies residues S161–D180. Residues R181–A191 lie on the Cytoplasmic side of the membrane. The chain crosses the membrane as a helical span at residues L192–L213. At Y214–K219 the chain is on the lumenal, vesicle side. The chain crosses the membrane as a helical span at residues P220–N242. Over P243–D266 the chain is Cytoplasmic. The helical transmembrane segment at P267–L286 threads the bilayer. Residues E287 to G303 lie on the Lumenal, vesicle side of the membrane. A helical transmembrane segment spans residues W304–L328. Over R329–T335 the chain is Cytoplasmic. The helical transmembrane segment at W336 to T356 threads the bilayer. At T357 to S367 the chain is on the lumenal, vesicle side. Residues F368–V388 form a helical membrane-spanning segment. At D389–V393 the chain is on the cytoplasmic side. A helical membrane pass occupies residues S394 to A412. Topologically, residues F413–A418 are lumenal, vesicle. The helical transmembrane segment at G419–T440 threads the bilayer. At Y441 to W532 the chain is on the cytoplasmic side.

Belongs to the major facilitator superfamily. Vesicular transporter family. Detected in most regions of the nervous system including the nerve ring, the ventral and dorsal nerve cords, and the pharyngeal nervous system. Expressed in most cholinergic neurons. In addition, expressed in SIA, SIB and SMB sublateral motor neurons.

It localises to the cytoplasmic vesicle. The protein localises to the secretory vesicle. Its subcellular location is the synaptic vesicle membrane. In terms of biological role, involved in acetylcholine transport into synaptic vesicles. In Caenorhabditis elegans, this protein is Vesicular acetylcholine transporter unc-17.